The following is a 248-amino-acid chain: Pulmonary surfactant-associated protein A (248 aa).

Positions 1–17 (MLLCSLTLMLLWMVASG) are cleaved as a signal peptide. A Collagen-like domain is found at 28–100 (GSPGIPGTPG…PGERGPPGFP (73 aa)). Residues 29–103 (SPGIPGTPGS…RGPPGFPAYL (75 aa)) are disordered. The segment covering 42-51 (PGRDGRDGIK) has biased composition (basic and acidic residues). The span at 54–65 (PGPPGPMGPPGG) shows a compositional bias: pro residues. Low complexity predominate over residues 69-82 (LPGRDGMTGAPGLP). The span at 84–93 (ERGEKGEPGE) shows a compositional bias: basic and acidic residues. The 121-residue stretch at 127–247 (LQGSMLEVGE…CLQYRLAICE (121 aa)) folds into the C-type lectin domain. Intrachain disulfides connect Cys155/Cys246 and Cys224/Cys238. N-linked (GlcNAc...) asparagine glycosylation is present at Asn207. Residues Glu215, Arg217, Asn234, and Asp235 each contribute to the Ca(2+) site.

This sequence belongs to the SFTPA family. As to quaternary structure, oligomeric complex of 6 set of homotrimers.

It is found in the secreted. The protein localises to the extracellular space. It localises to the extracellular matrix. The protein resides in the surface film. Functionally, in presence of calcium ions, it binds to surfactant phospholipids and contributes to lower the surface tension at the air-liquid interface in the alveoli of the mammalian lung and is essential for normal respiration. Enhances the expression of MYO18A/SP-R210 on alveolar macrophages. This chain is Pulmonary surfactant-associated protein A (SFTPA1), found in Ovis aries (Sheep).